The primary structure comprises 162 residues: Crossover junction endodeoxyribonuclease RuvC (162 aa).

Catalysis depends on residues aspartate 7, glutamate 67, and aspartate 140. Residues aspartate 7, glutamate 67, and aspartate 140 each coordinate Mg(2+).

This sequence belongs to the RuvC family. In terms of assembly, homodimer which binds Holliday junction (HJ) DNA. The HJ becomes 2-fold symmetrical on binding to RuvC with unstacked arms; it has a different conformation from HJ DNA in complex with RuvA. In the full resolvosome a probable DNA-RuvA(4)-RuvB(12)-RuvC(2) complex forms which resolves the HJ. It depends on Mg(2+) as a cofactor.

It localises to the cytoplasm. The catalysed reaction is Endonucleolytic cleavage at a junction such as a reciprocal single-stranded crossover between two homologous DNA duplexes (Holliday junction).. Functionally, the RuvA-RuvB-RuvC complex processes Holliday junction (HJ) DNA during genetic recombination and DNA repair. Endonuclease that resolves HJ intermediates. Cleaves cruciform DNA by making single-stranded nicks across the HJ at symmetrical positions within the homologous arms, yielding a 5'-phosphate and a 3'-hydroxyl group; requires a central core of homology in the junction. The consensus cleavage sequence is 5'-(A/T)TT(C/G)-3'. Cleavage occurs on the 3'-side of the TT dinucleotide at the point of strand exchange. HJ branch migration catalyzed by RuvA-RuvB allows RuvC to scan DNA until it finds its consensus sequence, where it cleaves and resolves the cruciform DNA. This chain is Crossover junction endodeoxyribonuclease RuvC, found in Wolinella succinogenes (strain ATCC 29543 / DSM 1740 / CCUG 13145 / JCM 31913 / LMG 7466 / NCTC 11488 / FDC 602W) (Vibrio succinogenes).